Reading from the N-terminus, the 237-residue chain is rRNA-processing protein EFG1 (237 aa).

Residues 1–24 (MPKTVKNPKNNKSRSRGAPIQVAE) are disordered. Coiled-coil stretches lie at residues 53 to 113 (DKKI…ISQT) and 166 to 186 (LKITEERRREFRKYIEKLMEE). The disordered stretch occupies residues 206–237 (NDKTQKAVLTEEIDAPEQKQDEQQEEQDDFFE). Acidic residues predominate over residues 228–237 (QQEEQDDFFE).

Belongs to the EFG1 family.

The protein localises to the nucleus. Its subcellular location is the nucleolus. Involved in rRNA processing. In Candida albicans (strain SC5314 / ATCC MYA-2876) (Yeast), this protein is rRNA-processing protein EFG1.